The following is a 123-amino-acid chain: Protein Wnt-7b (123 aa).

A lipid anchor (O-palmitoleoyl serine; by PORCN) is attached at Ser-1. Positions 33-61 (VEVVRASRLRQPTFLKIKQIKSYQKPMET) are disordered linker. An intrachain disulfide couples Cys-89 to Cys-104. The N-linked (GlcNAc...) asparagine glycan is linked to Asn-90.

This sequence belongs to the Wnt family. Palmitoleoylation is required for efficient binding to frizzled receptors. Depalmitoleoylation leads to Wnt signaling pathway inhibition.

The protein localises to the secreted. It is found in the extracellular space. Its subcellular location is the extracellular matrix. In terms of biological role, ligand for members of the frizzled family of seven transmembrane receptors that functions in the canonical Wnt/beta-catenin signaling pathway. Required for normal fusion of the chorion and the allantois during placenta development. Required for central nervous system (CNS) angiogenesis and blood-brain barrier regulation. In Anser caerulescens (Snow goose), this protein is Protein Wnt-7b (WNT7B).